Here is a 355-residue protein sequence, read N- to C-terminus: Protein RecA (355 aa).

67–74 (GPESSGKT) contacts ATP.

Belongs to the RecA family.

It localises to the cytoplasm. Functionally, can catalyze the hydrolysis of ATP in the presence of single-stranded DNA, the ATP-dependent uptake of single-stranded DNA by duplex DNA, and the ATP-dependent hybridization of homologous single-stranded DNAs. It interacts with LexA causing its activation and leading to its autocatalytic cleavage. The polypeptide is Protein RecA (Shewanella baltica (strain OS223)).